Consider the following 237-residue polypeptide: Octopine transport system permease protein OccQ (237 aa).

The ABC transmembrane type-1 domain maps to 22 to 222; sequence TGMTVAVASS…LITFISGQAF (201 aa). The next 4 membrane-spanning stretches (helical) occupy residues 24 to 44, 72 to 92, 96 to 116, and 201 to 221; these read MTVAVASSAFTIGLVFGCLGA, LVIYLFYFGSSSLISGVGSLF, GFVSAPAFLTGALAIGLVSAA, and FSFYLTAAALYLLITFISGQA.

This sequence belongs to the binding-protein-dependent transport system permease family. HisMQ subfamily.

The protein localises to the cell inner membrane. In terms of biological role, component of the octopine active transport system probably consisting of four subunits: Q, M, P and T. This Rhizobium meliloti (Ensifer meliloti) protein is Octopine transport system permease protein OccQ (occQ).